A 24-amino-acid polypeptide reads, in one-letter code: Sperm protamine P3 (24 aa).

Residues arginine 1–arginine 24 form a disordered region.

Testis.

It localises to the nucleus. It is found in the chromosome. Protamines substitute for histones in the chromatin of sperm during the haploid phase of spermatogenesis. They compact sperm DNA into a highly condensed, stable and inactive complex. This Octopus vulgaris (Common octopus) protein is Sperm protamine P3.